The primary structure comprises 718 residues: Putative methyltransferase NSUN7 (718 aa).

Cys-439 serves as the catalytic Nucleophile. Disordered regions lie at residues 536-557 (GKSS…KGAT), 578-616 (ANLS…PAVP), and 694-718 (SLSR…RRWL). The span at 538–549 (SSKREKKKKKSK) shows a compositional bias: basic residues. A compositionally biased stretch (polar residues) spans 591–604 (QKNTAQVGASSQTR). The segment covering 696 to 706 (SRKEEKPKDDT) has biased composition (basic and acidic residues).

Belongs to the class I-like SAM-binding methyltransferase superfamily. RsmB/NOP family.

Its function is as follows. May have S-adenosyl-L-methionine-dependent methyl-transferase activity. The polypeptide is Putative methyltransferase NSUN7 (NSUN7) (Homo sapiens (Human)).